Reading from the N-terminus, the 391-residue chain is Putative gustatory receptor 36b (391 aa).

Residues 1–4 lie on the Cytoplasmic side of the membrane; that stretch reads MVDW. A helical transmembrane segment spans residues 5-25; sequence VVLLLKAVHIYCYLIGLSNFE. Over 26-39 the chain is Extracellular; it reads FDCRTGRVFKSRRC. The helical transmembrane segment at 40–60 threads the bilayer; sequence TIYAFMANIFILITIIYNFTA. Over 61–74 the chain is Cytoplasmic; the sequence is HGDTNLLFQSANKL. Residues 75-95 traverse the membrane as a helical segment; it reads HEYVIIIMSGLKIVAGLITVL. Residues 96–127 are Extracellular-facing; that stretch reads NRWLQRGQMMQLVKDVIRLYMINPQLKSMIRW. Residues 128 to 148 traverse the membrane as a helical segment; sequence GILLKAFISFAIELLQVTLSV. Residues 149 to 165 are Cytoplasmic-facing; the sequence is DALDRQGTAEMMGLLVK. A helical transmembrane segment spans residues 166 to 186; it reads LCVSFIMNLAISQHFLVILLI. At 187–284 the chain is on the extracellular side; it reads RAQYRIMNAK…YKYGPHNLKL (98 aa). The chain crosses the membrane as a helical span at residues 285–305; that stretch reads SAKTSIIVCILITLFYLDALV. The Cytoplasmic portion of the chain corresponds to 306-363; sequence NCNNMLRVLDHHKDFLGLLEERTVFASSLDIRLEESFESLQLQLARNPLKINVMGMFP. Residues 364–384 traverse the membrane as a helical segment; sequence ITRGSTAAMCASVIVNSIFLI. Over 385–391 the chain is Extracellular; that stretch reads QFDMEFF.

Belongs to the insect chemoreceptor superfamily. Gustatory receptor (GR) family. Gr22e subfamily. As to expression, expressed in neurons of the terminal external chemosensory organ of larvae.

It is found in the cell membrane. Its function is as follows. Probable gustatory receptor which mediates acceptance or avoidance behavior, depending on its substrates. The protein is Putative gustatory receptor 36b (Gr36b) of Drosophila melanogaster (Fruit fly).